The following is a 160-amino-acid chain: 2-C-methyl-D-erythritol 2,4-cyclodiphosphate synthase (160 aa).

Aspartate 11 and histidine 13 together coordinate a divalent metal cation. Residues 11-13 (DVH) and 37-38 (HS) each bind 4-CDP-2-C-methyl-D-erythritol 2-phosphate. Position 45 (histidine 45) interacts with a divalent metal cation. 4-CDP-2-C-methyl-D-erythritol 2-phosphate contacts are provided by residues 59–61 (DIG) and arginine 145.

It belongs to the IspF family. Homotrimer. Requires a divalent metal cation as cofactor.

It catalyses the reaction 4-CDP-2-C-methyl-D-erythritol 2-phosphate = 2-C-methyl-D-erythritol 2,4-cyclic diphosphate + CMP. The protein operates within isoprenoid biosynthesis; isopentenyl diphosphate biosynthesis via DXP pathway; isopentenyl diphosphate from 1-deoxy-D-xylulose 5-phosphate: step 4/6. Its function is as follows. Involved in the biosynthesis of isopentenyl diphosphate (IPP) and dimethylallyl diphosphate (DMAPP), two major building blocks of isoprenoid compounds. Catalyzes the conversion of 4-diphosphocytidyl-2-C-methyl-D-erythritol 2-phosphate (CDP-ME2P) to 2-C-methyl-D-erythritol 2,4-cyclodiphosphate (ME-CPP) with a corresponding release of cytidine 5-monophosphate (CMP). The sequence is that of 2-C-methyl-D-erythritol 2,4-cyclodiphosphate synthase from Neisseria gonorrhoeae (strain ATCC 700825 / FA 1090).